The sequence spans 336 residues: IgLON family member 5 (336 aa).

Positions 1–30 are cleaved as a signal peptide; the sequence is MPPPAPGARLRLLAAAALAGLAVISRGLLS. 3 consecutive Ig-like C2-type domains span residues 33 to 122, 132 to 217, and 218 to 307; these read LEFN…QPYT, PARI…VNYP, and PTIT…MRLL. Residues Asn41, Asn49, Asn67, and Asn137 are each glycosylated (N-linked (GlcNAc...) asparagine). Cys54 and Cys112 are oxidised to a cystine. Disulfide bonds link Cys154–Cys195 and Cys238–Cys291. An N-linked (GlcNAc...) asparagine glycan is attached at Asn288.

Belongs to the immunoglobulin superfamily. IgLON family.

It localises to the secreted. This Homo sapiens (Human) protein is IgLON family member 5 (IGLON5).